The sequence spans 1407 residues: DNA-directed RNA polymerase subunit beta' (1407 aa).

Zn(2+)-binding residues include Cys70, Cys72, Cys85, and Cys88. Mg(2+) is bound by residues Asp460, Asp462, and Asp464. Zn(2+) contacts are provided by Cys814, Cys888, Cys895, and Cys898. The residue at position 972 (Lys972) is an N6-acetyllysine.

The protein belongs to the RNA polymerase beta' chain family. As to quaternary structure, the RNAP catalytic core consists of 2 alpha, 1 beta, 1 beta' and 1 omega subunit. When a sigma factor is associated with the core the holoenzyme is formed, which can initiate transcription. Requires Mg(2+) as cofactor. The cofactor is Zn(2+).

The enzyme catalyses RNA(n) + a ribonucleoside 5'-triphosphate = RNA(n+1) + diphosphate. Its function is as follows. DNA-dependent RNA polymerase catalyzes the transcription of DNA into RNA using the four ribonucleoside triphosphates as substrates. This is DNA-directed RNA polymerase subunit beta' from Shigella dysenteriae serotype 1 (strain Sd197).